The following is a 445-amino-acid chain: Inner membrane metabolite transport protein YgcS (445 aa).

At M1–A22 the chain is on the cytoplasmic side. The chain crosses the membrane as a helical span at residues L23–I43. The Periplasmic portion of the chain corresponds to Q44–A56. Residues G57–I77 traverse the membrane as a helical segment. Topologically, residues S78–K85 are cytoplasmic. Residues I86–T106 traverse the membrane as a helical segment. Residues P107–R114 lie on the Periplasmic side of the membrane. The helical transmembrane segment at I115–F135 threads the bilayer. At S136 to G142 the chain is on the cytoplasmic side. Residues I143–G163 traverse the membrane as a helical segment. Topologically, residues H164–R175 are periplasmic. The chain crosses the membrane as a helical span at residues W176 to P196. The Cytoplasmic segment spans residues E197 to S253. Residues V254–A274 form a helical membrane-spanning segment. The Periplasmic segment spans residues Q275–S286. A helical membrane pass occupies residues L287–L307. Topologically, residues A308–K311 are cytoplasmic. The chain crosses the membrane as a helical span at residues F312–S332. Residues G333–T337 lie on the Periplasmic side of the membrane. A helical transmembrane segment spans residues L338–L358. Over P359–S369 the chain is Cytoplasmic. A helical membrane pass occupies residues L370–L390. At P391–Q400 the chain is on the periplasmic side. Residues V401 to A421 traverse the membrane as a helical segment. Residues P422–V445 are Cytoplasmic-facing.

It belongs to the major facilitator superfamily. Sugar transporter (TC 2.A.1.1) family.

The protein localises to the cell inner membrane. The protein is Inner membrane metabolite transport protein YgcS (ygcS) of Escherichia coli (strain K12).